The following is a 144-amino-acid chain: MKIMVINGPNLNLLGIREKEIYGAKDFNQVIDYIKEEGKELGLEVNCFQSNIEGEIINFIHNAYFEKYDGIIINPGAYTHYSIAIYDALKGVEIPTVEVHLSNIHKREEFRHKSVTAPACIGQISGFGEYGYIMAMNALKNKIK.

Tyr22 (proton acceptor) is an active-site residue. Asn74, His80, and Asp87 together coordinate substrate. The Proton donor role is filled by His100. Substrate-binding positions include 101 to 102 (LS) and Arg111.

It belongs to the type-II 3-dehydroquinase family. As to quaternary structure, homododecamer.

It catalyses the reaction 3-dehydroquinate = 3-dehydroshikimate + H2O. Its pathway is metabolic intermediate biosynthesis; chorismate biosynthesis; chorismate from D-erythrose 4-phosphate and phosphoenolpyruvate: step 3/7. Functionally, catalyzes a trans-dehydration via an enolate intermediate. The chain is 3-dehydroquinate dehydratase from Clostridium perfringens (strain ATCC 13124 / DSM 756 / JCM 1290 / NCIMB 6125 / NCTC 8237 / Type A).